The primary structure comprises 458 residues: Argininosuccinate lyase (458 aa).

The protein belongs to the lyase 1 family. Argininosuccinate lyase subfamily.

It localises to the cytoplasm. It carries out the reaction 2-(N(omega)-L-arginino)succinate = fumarate + L-arginine. It functions in the pathway amino-acid biosynthesis; L-arginine biosynthesis; L-arginine from L-ornithine and carbamoyl phosphate: step 3/3. The protein is Argininosuccinate lyase of Pelobacter propionicus (strain DSM 2379 / NBRC 103807 / OttBd1).